Reading from the N-terminus, the 43-residue chain is MRDLKTYLSVAPVLSALWFGALAGLLIEINRFFPDALTFPFFS.

Residues 7–27 (YLSVAPVLSALWFGALAGLLI) form a helical membrane-spanning segment.

It belongs to the PsaJ family.

It is found in the plastid. Its subcellular location is the chloroplast thylakoid membrane. In terms of biological role, may help in the organization of the PsaE and PsaF subunits. In Oenothera argillicola (Appalachian evening primrose), this protein is Photosystem I reaction center subunit IX.